Here is a 378-residue protein sequence, read N- to C-terminus: Mitogen-activated protein kinase mpkC (378 aa).

The region spanning 20–300 is the Protein kinase domain; sequence YVNPQPIGMG…AQDALRYPYL (281 aa). ATP is bound by residues 26–34 and Lys-49; that span reads IGMGSFGLV. Residue Asp-141 is the Proton acceptor of the active site. Phosphothreonine is present on Thr-171. The short motif at 171–173 is the TXY element; that stretch reads TGY. Tyr-173 bears the Phosphotyrosine mark.

Belongs to the protein kinase superfamily. Ser/Thr protein kinase family. MAP kinase subfamily. HOG1 sub-subfamily. In terms of assembly, interacts with sakA upon osmotic and cell wall stresses. The cofactor is Mg(2+). In terms of processing, dually phosphorylated on Thr-171 and Tyr-173, which activates the enzyme.

It localises to the cytoplasm. The protein resides in the nucleus. It catalyses the reaction L-seryl-[protein] + ATP = O-phospho-L-seryl-[protein] + ADP + H(+). The enzyme catalyses L-threonyl-[protein] + ATP = O-phospho-L-threonyl-[protein] + ADP + H(+). With respect to regulation, activated by tyrosine and threonine phosphorylation. Functionally, mitogen-activated protein kinase; part of an osmotic and general signal pathways involved in regulation of the response to the cell wall damage, oxidative stress, drug resistance, and establishment of infection. Required for growth on media where sorbitol or mannitol is the sole carbon source. With sakA, plays a redundant or cooperative role in the conidial stress resistance. Also plays a supportive role in osmotic stress adaptation when sakA is deficient. Involved in paradoxical growth, the cell wall integrity (CWI) pathway and biofilm formation. Acts by modulating sakA activity upon exposure to several types o stresses and during cell wall biosynthesis. Also collaborates with sakA to allow ful virulence in a neutropenic murine model of invasive pulmonary aspergillosis. MpkC and sakA have both independent and collaborative functions during the transcriptional response to transient osmotic stress, and mpkC plays a major role in the modulation of the response to DNA metabolism while activating mitochondrial functions and cation transport. This Aspergillus fumigatus (strain ATCC MYA-4609 / CBS 101355 / FGSC A1100 / Af293) (Neosartorya fumigata) protein is Mitogen-activated protein kinase mpkC (mpkC).